The primary structure comprises 233 residues: Antiholin-like protein LrgB (233 aa).

Helical transmembrane passes span 5–25 (LGINTPYFGILVSLIPFVIAT), 33–53 (GFFLLAPLFVSMVAGIAFLKL), 63–83 (IGGDIINFFLEPATICFAIPL), 97–117 (IFGGIAVGTIIALLLIYLVAI), 152–172 (LTSLAVILNAVVISALGAKIV), and 212–232 (IAVVIVGVIVVAVVPILAPIL).

Belongs to the CidB/LrgB family. LrgB subfamily.

Its subcellular location is the cell membrane. Its function is as follows. Inhibits the expression or activity of extracellular murein hydrolases by interacting, possibly with LrgA, with the holin-like proteins CidA and/or CidB. The LrgAB and CidAB proteins may affect the proton motive force of the membrane. May be involved in programmed cell death (PCD), possibly triggering PCD in response to antibiotics and environmental stresses. This chain is Antiholin-like protein LrgB, found in Staphylococcus epidermidis (strain ATCC 12228 / FDA PCI 1200).